Here is a 460-residue protein sequence, read N- to C-terminus: tRNA modification GTPase MnmE (460 aa).

Arginine 29, glutamate 91, and lysine 132 together coordinate (6S)-5-formyl-5,6,7,8-tetrahydrofolate. The region spanning 227–383 (GISIALIGKT…LIDTIIKKCG (157 aa)) is the TrmE-type G domain. Asparagine 237 serves as a coordination point for K(+). Residues 237–242 (NVGKSS), 256–262 (TNIPGTT), and 281–284 (DTAG) contribute to the GTP site. Serine 241 contacts Mg(2+). 3 residues coordinate K(+): threonine 256, isoleucine 258, and threonine 261. Residue threonine 262 participates in Mg(2+) binding. (6S)-5-formyl-5,6,7,8-tetrahydrofolate is bound at residue lysine 460.

This sequence belongs to the TRAFAC class TrmE-Era-EngA-EngB-Septin-like GTPase superfamily. TrmE GTPase family. In terms of assembly, homodimer. Heterotetramer of two MnmE and two MnmG subunits. Requires K(+) as cofactor.

Its subcellular location is the cytoplasm. In terms of biological role, exhibits a very high intrinsic GTPase hydrolysis rate. Involved in the addition of a carboxymethylaminomethyl (cmnm) group at the wobble position (U34) of certain tRNAs, forming tRNA-cmnm(5)s(2)U34. The sequence is that of tRNA modification GTPase MnmE from Prochlorococcus marinus (strain MIT 9301).